The chain runs to 398 residues: Succinate--CoA ligase [ADP-forming] subunit beta (398 aa).

The 245-residue stretch at 9–253 folds into the ATP-grasp domain; the sequence is KQVLAKYGVA…ESEEDPAELE (245 aa). Residues Lys46, 53-55, Glu108, Cys111, and Glu116 each bind ATP; that span reads GRG. Asn208 and Asp222 together coordinate Mg(2+). Substrate is bound by residues Asn273 and 330–332; that span reads GIM.

This sequence belongs to the succinate/malate CoA ligase beta subunit family. Heterotetramer of two alpha and two beta subunits. It depends on Mg(2+) as a cofactor.

It catalyses the reaction succinate + ATP + CoA = succinyl-CoA + ADP + phosphate. The catalysed reaction is GTP + succinate + CoA = succinyl-CoA + GDP + phosphate. It participates in carbohydrate metabolism; tricarboxylic acid cycle; succinate from succinyl-CoA (ligase route): step 1/1. Its function is as follows. Succinyl-CoA synthetase functions in the citric acid cycle (TCA), coupling the hydrolysis of succinyl-CoA to the synthesis of either ATP or GTP and thus represents the only step of substrate-level phosphorylation in the TCA. The beta subunit provides nucleotide specificity of the enzyme and binds the substrate succinate, while the binding sites for coenzyme A and phosphate are found in the alpha subunit. The chain is Succinate--CoA ligase [ADP-forming] subunit beta from Paramagnetospirillum magneticum (strain ATCC 700264 / AMB-1) (Magnetospirillum magneticum).